We begin with the raw amino-acid sequence, 451 residues long: Hexokinase (451 aa).

In terms of domain architecture, Hexokinase spans 6–445 (QQLFEKVVEI…SGKGAAAIAA (440 aa)). The segment at 63-195 (NGTETGNFLA…ELNVKCVAVV (133 aa)) is hexokinase small subdomain. Position 74–79 (74–79 (DLGGTN)) interacts with ATP. Residues Ser144, 161–162 (TK), 196–197 (ND), 222–223 (TN), Glu249, and Glu283 contribute to the substrate site. The segment at 196–434 (NDTVGTLASC…TRFCLRLSED (239 aa)) is hexokinase large subdomain. ATP is bound by residues 288–289 (GM), 325–329 (TRYLT), and 401–405 (SLYKF).

This sequence belongs to the hexokinase family. Monomer.

It catalyses the reaction a D-hexose + ATP = a D-hexose 6-phosphate + ADP + H(+). The catalysed reaction is D-mannose + ATP = D-mannose 6-phosphate + ADP + H(+). It carries out the reaction D-fructose + ATP = D-fructose 6-phosphate + ADP + H(+). The enzyme catalyses D-glucose + ATP = D-glucose 6-phosphate + ADP + H(+). The protein operates within carbohydrate metabolism; hexose metabolism. Its pathway is carbohydrate degradation; glycolysis; D-glyceraldehyde 3-phosphate and glycerone phosphate from D-glucose: step 1/4. Functionally, catalyzes the phosphorylation of various hexoses to hexose 6-phosphate. The chain is Hexokinase from Schistosoma mansoni (Blood fluke).